Consider the following 61-residue polypeptide: Large ribosomal subunit protein uL30 (61 aa).

It belongs to the universal ribosomal protein uL30 family. As to quaternary structure, part of the 50S ribosomal subunit.

The sequence is that of Large ribosomal subunit protein uL30 from Bordetella petrii (strain ATCC BAA-461 / DSM 12804 / CCUG 43448).